A 208-amino-acid polypeptide reads, in one-letter code: Small ribosomal subunit protein eS8 (208 aa).

A disordered region spans residues 1-33; sequence MGISRDHWHKRRATGGKRKPIRKKRKFELGRPA. Positions 7 to 26 are enriched in basic residues; that stretch reads HWHKRRATGGKRKPIRKKRK.

It belongs to the eukaryotic ribosomal protein eS8 family.

The polypeptide is Small ribosomal subunit protein eS8 (RpS8) (Apis mellifera (Honeybee)).